Reading from the N-terminus, the 1368-residue chain is DNA-directed RNA polymerase subunit beta (1368 aa).

The protein belongs to the RNA polymerase beta chain family. As to quaternary structure, the RNAP catalytic core consists of 2 alpha, 1 beta, 1 beta' and 1 omega subunit. When a sigma factor is associated with the core the holoenzyme is formed, which can initiate transcription.

It catalyses the reaction RNA(n) + a ribonucleoside 5'-triphosphate = RNA(n+1) + diphosphate. Its function is as follows. DNA-dependent RNA polymerase catalyzes the transcription of DNA into RNA using the four ribonucleoside triphosphates as substrates. The polypeptide is DNA-directed RNA polymerase subunit beta (Cupriavidus necator (strain ATCC 17699 / DSM 428 / KCTC 22496 / NCIMB 10442 / H16 / Stanier 337) (Ralstonia eutropha)).